A 397-amino-acid polypeptide reads, in one-letter code: 4-O-methyl-glucuronoyl methylesterase (397 aa).

The first 18 residues, 1-18 (MVHLTSALLVAGAAFAAA), serve as a signal peptide directing secretion. Cystine bridges form between Cys31-Cys65, Cys212-Cys347, and Cys244-Cys319. Residues 211-216 (GCSRNG) carry the GXSYXG catalytic site motif motif. Ser213 (nucleophile) is an active-site residue. 4 residues coordinate substrate: Lys217, Gln259, Glu267, and Trp310. The active-site Proton donor/acceptor is His346.

Belongs to the carbohydrate esterase 15 (CE15) family.

It localises to the secreted. It catalyses the reaction a 4-O-methyl-alpha-D-glucuronosyl ester derivative + H2O = 4-O-methyl-alpha-D-glucuronate derivative + an alcohol + H(+). Glucuronoyl esterase which may play a significant role in biomass degradation, as it is considered to disconnect hemicellulose from lignin through the hydrolysis of the ester bond between 4-O-methyl-D-glucuronic acid residues of glucuronoxylans and aromatic alcohols of lignin. This is 4-O-methyl-glucuronoyl methylesterase (ge2) from Thermothelomyces thermophilus (strain ATCC 42464 / BCRC 31852 / DSM 1799) (Sporotrichum thermophile).